A 434-amino-acid polypeptide reads, in one-letter code: MTAENATLLEPVLGKDEIGWMFVQEYYTYLNKEPNRLHCFYTKKSTLIHGDEGESISLCHGQQEIHNKILDLDFQNCKVLISNVDSLASSNGGIVIQVLGEMSNKGKLSRKFAQTFFLAEQPNGYFVLNDIFRFLREDVEEEEESPDAVEKEKKDVASEPYVNGVQSQEHLPSAKEEGHYQDPAATENNFATAALISNETDSLNQATLAVPEEPVIQVTEASVPSFVSQQENQLQDEALTSNSKNADAIGASDANVATAPKSWADLIARNHPDVKSQASVSSTASTTGQTVKGVNADQTQQPTAPYTQSNELLETSVFVKNIPPETSDVSLKSAMSIFGPVKAIEFARRKGTAYVDFVNHECVQLALNKKTLQINNATLNIEERRRLFSGKFNKSGDKKSNDNYNGMKRNFRKGNRGAFDGRSKEVTTSKKQNN.

The region spanning 18–134 (IGWMFVQEYY…YFVLNDIFRF (117 aa)) is the NTF2 domain. 2 disordered regions span residues 141 to 180 (EEEE…EGHY) and 274 to 308 (VKSQ…PYTQ). Serine 145 carries the post-translational modification Phosphoserine. Over residues 148-157 (AVEKEKKDVA) the composition is skewed to basic and acidic residues. Over residues 276–291 (SQASVSSTASTTGQTV) the composition is skewed to low complexity. Positions 296-308 (ADQTQQPTAPYTQ) are enriched in polar residues. The region spanning 315–386 (TSVFVKNIPP…ATLNIEERRR (72 aa)) is the RRM domain. Residues 390–434 (GKFNKSGDKKSNDNYNGMKRNFRKGNRGAFDGRSKEVTTSKKQNN) are disordered. A compositionally biased stretch (basic and acidic residues) spans 419-428 (FDGRSKEVTT).

Probable scaffold protein that may be involved in mRNA transport. The protein is Putative G3BP-like protein (nxt3) of Schizosaccharomyces pombe (strain 972 / ATCC 24843) (Fission yeast).